Consider the following 125-residue polypeptide: Small ribosomal subunit protein bS6 (125 aa).

A disordered region spans residues 96-125; the sequence is ETGASSMMKTVEREEARKASQAEFAAANER. Basic and acidic residues predominate over residues 105–115; it reads TVEREEARKAS.

Belongs to the bacterial ribosomal protein bS6 family.

In terms of biological role, binds together with bS18 to 16S ribosomal RNA. In Paracidovorax citrulli (strain AAC00-1) (Acidovorax citrulli), this protein is Small ribosomal subunit protein bS6.